The primary structure comprises 886 residues: DNA mismatch repair protein MutS (886 aa).

641–648 is a binding site for ATP; the sequence is GPNMAGKS.

This sequence belongs to the DNA mismatch repair MutS family.

In terms of biological role, this protein is involved in the repair of mismatches in DNA. It is possible that it carries out the mismatch recognition step. This protein has a weak ATPase activity. This chain is DNA mismatch repair protein MutS, found in Rickettsia rickettsii (strain Sheila Smith).